Reading from the N-terminus, the 720-residue chain is Cyclic nucleotide-gated ion channel 17 (720 aa).

Topologically, residues 1–85 are cytoplasmic; sequence MELRKDKLLM…SEIVLKWNWV (85 aa). The chain crosses the membrane as a helical span at residues 86–106; that stretch reads FIVSCMVALFIDPLYFFVPAI. Topologically, residues 107–121 are extracellular; sequence GGDKNYPCARTDTSL. Residues 122–142 form a helical membrane-spanning segment; it reads SILVTFFRTIADLFYLLHIFI. Topologically, residues 143-178 are cytoplasmic; that stretch reads KFRTGFIAPNSSTRVFGRGELVMDPKAIAWRYIKSD. The helical transmembrane segment at 179 to 199 threads the bilayer; sequence FIIDLIATLPLPQIVIWFVIS. Topologically, residues 200–211 are extracellular; that stretch reads TTKSYRFDHNNN. A helical transmembrane segment spans residues 212 to 232; that stretch reads AIALIVLLQYIPRFYLIIPLS. Over 233–252 the chain is Cytoplasmic; the sequence is SQIVKATGVVTKTAWAGAAY. A helical membrane pass occupies residues 253–273; the sequence is NLLLYMLASHVLGAAWYILSV. Residues 274 to 377 lie on the Extracellular side of the membrane; sequence DRYTSCWKSR…LSTTMFMGET (104 aa). A helical membrane pass occupies residues 378 to 398; the sequence is TFAVLIAIFGLVLFAHLIGNM. At 399–720 the chain is on the cytoplasmic side; the sequence is QTYLQSLTVR…EPDFSAEHDD (322 aa). A nucleoside 3',5'-cyclic phosphate contacts are provided by residues 481–605 and Glu-552; that span reads FFSQ…SKKL. Positions 597-612 are calmodulin-binding; the sequence is FRRLHSKKLQHTFRFY. The IQ domain maps to 617 to 646; that stretch reads RTWAACFIQAAWRRYKRRVMENNLTAIESM.

It belongs to the cyclic nucleotide-gated cation channel (TC 1.A.1.5) family. In terms of assembly, homotetramer or heterotetramer. Part of a functional complex containing PSKR1, BAK1, CNGC17, and AHA. Interacts with AHA1, AHA2, and BAK1, but not with PSKR1 or BRI1.

It is found in the cell membrane. Functionally, probable cyclic nucleotide-gated ion channel. Forms a functional cation-translocating unit with AHAs that is activated by PSKR1/BAK1 and possibly other BAK1/RLK complexes. Required for PSK-induced protoplast expansion. This Arabidopsis thaliana (Mouse-ear cress) protein is Cyclic nucleotide-gated ion channel 17.